Here is a 130-residue protein sequence, read N- to C-terminus: Small ribosomal subunit protein uS11 (130 aa).

Belongs to the universal ribosomal protein uS11 family. In terms of assembly, part of the 30S ribosomal subunit. Interacts with proteins S7 and S18. Binds to IF-3.

Its function is as follows. Located on the platform of the 30S subunit, it bridges several disparate RNA helices of the 16S rRNA. Forms part of the Shine-Dalgarno cleft in the 70S ribosome. The protein is Small ribosomal subunit protein uS11 of Caldicellulosiruptor bescii (strain ATCC BAA-1888 / DSM 6725 / KCTC 15123 / Z-1320) (Anaerocellum thermophilum).